We begin with the raw amino-acid sequence, 700 residues long: Stonustoxin subunit beta (700 aa).

A structural MACPF/CDC pore-forming domain region spans residues 2–264 (PSDILVVAAL…EAPQLMADSS (263 aa)). The tract at residues 265–384 (TPILRKVRNT…DILTKAKPKV (120 aa)) is structural FAT domain. The thioredoxin (THX) domain stretch occupies residues 385-514 (IFNQGVLFKG…PYMPGVESIK (130 aa)). A B30.2/SPRY domain is found at 506 to 700 (YMPGVESIKD…QKVNGQIKLL (195 aa)).

This sequence belongs to the SNTX/VTX toxin family. As to quaternary structure, heterodimer of alpha and beta subunits; non-covalently linked. In terms of processing, intrachain disulfide bonds may be present in the heterodimer. Post-translationally, not glycosylated. Expressed by the venom gland.

The protein localises to the secreted. Functionally, this lethal (towards mammals) heterodimer induces hemolytic activities due to its ability to form pores in the cell membrane. The pore may be composed of 10 SNTX-alpha/beta heterodimers. The toxin elicits potent hypotension which is endothelium-dependent and appears to be mediated by the nitric oxide pathway and activation of potassium channels. In addition, it displays edema-inducing activities, increases vascular permeability. It also shows myotoxic activities and interferes irreversibly with neuromuscular function. It also induces irreversible platelet aggregation in rabbit or rat but not in human or mouse whole blood. In addition, it has been observed to increase spontaneous quantal acetylcholine release from isolated frog cutaneous pectoris motor endings. The protein is Stonustoxin subunit beta of Synanceia horrida (Estuarine stonefish).